Consider the following 156-residue polypeptide: Small ribosomal subunit protein uS7 (156 aa).

It belongs to the universal ribosomal protein uS7 family. In terms of assembly, part of the 30S ribosomal subunit. Contacts proteins S9 and S11.

Functionally, one of the primary rRNA binding proteins, it binds directly to 16S rRNA where it nucleates assembly of the head domain of the 30S subunit. Is located at the subunit interface close to the decoding center, probably blocks exit of the E-site tRNA. This Corynebacterium jeikeium (strain K411) protein is Small ribosomal subunit protein uS7.